We begin with the raw amino-acid sequence, 209 residues long: Pyridoxine/pyridoxamine 5'-phosphate oxidase (209 aa).

Residues Arg-57–Lys-62, Tyr-72–Thr-73, Lys-79, and Gln-101 each bind FMN. Substrate is bound at residue Lys-62. Positions 119, 123, and 127 each coordinate substrate. FMN contacts are provided by residues Gln-136–Ser-137 and Trp-181. Arg-187–His-189 is a substrate binding site. Arg-191 serves as a coordination point for FMN.

This sequence belongs to the pyridoxamine 5'-phosphate oxidase family. In terms of assembly, homodimer. FMN serves as cofactor.

It catalyses the reaction pyridoxamine 5'-phosphate + O2 + H2O = pyridoxal 5'-phosphate + H2O2 + NH4(+). The catalysed reaction is pyridoxine 5'-phosphate + O2 = pyridoxal 5'-phosphate + H2O2. The protein operates within cofactor metabolism; pyridoxal 5'-phosphate salvage; pyridoxal 5'-phosphate from pyridoxamine 5'-phosphate: step 1/1. It functions in the pathway cofactor metabolism; pyridoxal 5'-phosphate salvage; pyridoxal 5'-phosphate from pyridoxine 5'-phosphate: step 1/1. Functionally, catalyzes the oxidation of either pyridoxine 5'-phosphate (PNP) or pyridoxamine 5'-phosphate (PMP) into pyridoxal 5'-phosphate (PLP). This is Pyridoxine/pyridoxamine 5'-phosphate oxidase from Chelativorans sp. (strain BNC1).